Consider the following 342-residue polypeptide: tRNA(Ile)-lysidine synthase (342 aa).

31-36 provides a ligand contact to ATP; that stretch reads SGGQDS.

It belongs to the tRNA(Ile)-lysidine synthase family.

The protein localises to the cytoplasm. The enzyme catalyses cytidine(34) in tRNA(Ile2) + L-lysine + ATP = lysidine(34) in tRNA(Ile2) + AMP + diphosphate + H(+). In terms of biological role, ligates lysine onto the cytidine present at position 34 of the AUA codon-specific tRNA(Ile) that contains the anticodon CAU, in an ATP-dependent manner. Cytidine is converted to lysidine, thus changing the amino acid specificity of the tRNA from methionine to isoleucine. This chain is tRNA(Ile)-lysidine synthase, found in Nostoc sp. (strain PCC 7120 / SAG 25.82 / UTEX 2576).